A 205-amino-acid chain; its full sequence is Large ribosomal subunit protein bL17c (205 aa).

Residues 1-89 (MASASTTWSM…VIDNGGRVFA (89 aa)) constitute a chloroplast transit peptide.

It belongs to the bacterial ribosomal protein bL17 family. In terms of assembly, part of the 50S ribosomal subunit.

The protein resides in the plastid. Its subcellular location is the chloroplast. Its function is as follows. This protein binds directly to 23S ribosomal RNA. In Nicotiana tabacum (Common tobacco), this protein is Large ribosomal subunit protein bL17c (RPL17).